The chain runs to 92 residues: Long neurotoxin 1 (92 aa).

Residues 1-21 (MKTLLLTLVVVTIVCLDLGYT) form the signal peptide. Cystine bridges form between cysteine 24/cysteine 42, cysteine 35/cysteine 63, cysteine 67/cysteine 79, and cysteine 80/cysteine 85.

This sequence belongs to the three-finger toxin family. Long-chain subfamily. Type II alpha-neurotoxin sub-subfamily. In terms of tissue distribution, expressed by the venom gland.

The protein resides in the secreted. In terms of biological role, binds with high affinity to muscular (alpha-1/CHRNA1) and neuronal (alpha-7/CHRNA7) nicotinic acetylcholine receptor (nAChR) and inhibits acetylcholine from binding to the receptor, thereby impairing neuromuscular and neuronal transmission. In Oxyuranus scutellatus scutellatus (Australian taipan), this protein is Long neurotoxin 1.